Consider the following 669-residue polypeptide: Zinc finger CCCH domain-containing protein 17 (669 aa).

A compositionally biased stretch (low complexity) spans 1 to 11 (MFAPATQPQQQ). The disordered stretch occupies residues 1-23 (MFAPATQPQQQHEQKKQSETVSS). C3H1-type zinc fingers lie at residues 34–58 (DCVY…HSEY), 60–86 (RMNP…HPPL), and 114–141 (AKQP…HTPN). Disordered regions lie at residues 150–175 (PVEA…EKKL), 285–306 (VEDR…PDFS), 376–589 (GMRL…VMEE), and 642–669 (EEGE…EMLS). 6 stretches are compositionally biased toward basic and acidic residues: residues 164–175 (KPIENNTEEKKL), 285–299 (VEDR…RGNS), 392–406 (SMDR…DTPR), 420–464 (KLRE…EENH), 478–499 (RRRE…ESKP), and 547–579 (NNKD…PKAE). 2 stretches are compositionally biased toward acidic residues: residues 580 to 589 (VEEEGTVMEE) and 642 to 659 (EEGE…GEED). The span at 660-669 (IEKKTVEMLS) shows a compositional bias: basic and acidic residues.

This Arabidopsis thaliana (Mouse-ear cress) protein is Zinc finger CCCH domain-containing protein 17.